The sequence spans 266 residues: Methyl-coenzyme M reductase II subunit gamma (266 aa).

Position 123 (Arg-123) interacts with coenzyme M.

Belongs to the methyl-coenzyme M reductase gamma subunit family. MCR is a hexamer of two alpha, two beta, and two gamma chains, forming a dimer of heterotrimers. Coenzyme F430 is required as a cofactor.

The catalysed reaction is coenzyme B + methyl-coenzyme M = methane + coenzyme M-coenzyme B heterodisulfide. It functions in the pathway one-carbon metabolism; methyl-coenzyme M reduction; methane from methyl-coenzyme M: step 1/1. Its function is as follows. Component of the methyl-coenzyme M reductase (MCR) I that catalyzes the reductive cleavage of methyl-coenzyme M (CoM-S-CH3 or 2-(methylthio)ethanesulfonate) using coenzyme B (CoB or 7-mercaptoheptanoylthreonine phosphate) as reductant which results in the production of methane and the mixed heterodisulfide of CoB and CoM (CoM-S-S-CoB). This is the final step in methanogenesis. The protein is Methyl-coenzyme M reductase II subunit gamma (mrtG) of Methanocaldococcus jannaschii (strain ATCC 43067 / DSM 2661 / JAL-1 / JCM 10045 / NBRC 100440) (Methanococcus jannaschii).